The following is a 505-amino-acid chain: DDB1- and CUL4-associated factor 17 (505 aa).

Helical transmembrane passes span 186-206 and 222-242; these read VLLYLAVFRVLPFSLVGILEI and GILIVMYSSGLVRLYSFQAII.

As to quaternary structure, interacts with DDB1, CUL4A and CUL4B.

It is found in the membrane. The protein resides in the nucleus. The protein localises to the nucleolus. The protein operates within protein modification; protein ubiquitination. May function as a substrate receptor for CUL4-DDB1 E3 ubiquitin-protein ligase complex. The chain is DDB1- and CUL4-associated factor 17 (Dcaf17) from Rattus norvegicus (Rat).